A 319-amino-acid polypeptide reads, in one-letter code: ATP-dependent 6-phosphofructokinase (319 aa).

Gly-11 is an ATP binding site. 21–25 (RAVVR) is an ADP binding site. Residues 72–73 (RY) and 102–105 (GDGS) each bind ATP. Asp-103 contacts Mg(2+). 125 to 127 (TID) serves as a coordination point for substrate. Catalysis depends on Asp-127, which acts as the Proton acceptor. Arg-154 contributes to the ADP binding site. Residues Arg-162 and 169–171 (MGR) each bind substrate. Residues 185-187 (GAE), Arg-211, and 213-215 (KKH) contribute to the ADP site. Substrate is bound by residues Glu-222, Arg-243, and 249 to 252 (HVQR).

The protein belongs to the phosphofructokinase type A (PFKA) family. ATP-dependent PFK group I subfamily. Prokaryotic clade 'B1' sub-subfamily. In terms of assembly, homotetramer. The cofactor is Mg(2+).

Its subcellular location is the cytoplasm. It catalyses the reaction beta-D-fructose 6-phosphate + ATP = beta-D-fructose 1,6-bisphosphate + ADP + H(+). It participates in carbohydrate degradation; glycolysis; D-glyceraldehyde 3-phosphate and glycerone phosphate from D-glucose: step 3/4. Its activity is regulated as follows. Allosterically activated by ADP and other diphosphonucleosides, and allosterically inhibited by phosphoenolpyruvate. Catalyzes the phosphorylation of D-fructose 6-phosphate to fructose 1,6-bisphosphate by ATP, the first committing step of glycolysis. The protein is ATP-dependent 6-phosphofructokinase of Listeria monocytogenes serotype 4a (strain HCC23).